A 223-amino-acid chain; its full sequence is Lipoprotein-releasing system ATP-binding protein LolD (223 aa).

In terms of domain architecture, ABC transporter spans 2–223 (IQVRNLKKTF…LRDGEIVTCA (222 aa)). 38–45 (GVSGAGKT) is an ATP binding site.

It belongs to the ABC transporter superfamily. Lipoprotein translocase (TC 3.A.1.125) family. The complex is composed of two ATP-binding proteins (LolD) and two transmembrane proteins (LolC and LolE).

It localises to the cell inner membrane. Part of the ABC transporter complex LolCDE involved in the translocation of mature outer membrane-directed lipoproteins, from the inner membrane to the periplasmic chaperone, LolA. Responsible for the formation of the LolA-lipoprotein complex in an ATP-dependent manner. The chain is Lipoprotein-releasing system ATP-binding protein LolD from Syntrophus aciditrophicus (strain SB).